A 233-amino-acid polypeptide reads, in one-letter code: Small ribosomal subunit protein uS3 (233 aa).

In terms of domain architecture, KH type-2 spans 39 to 107; the sequence is VRQFLTKELS…PAQINTYEIR (69 aa).

The protein belongs to the universal ribosomal protein uS3 family. As to quaternary structure, part of the 30S ribosomal subunit. Forms a tight complex with proteins S10 and S14.

Its function is as follows. Binds the lower part of the 30S subunit head. Binds mRNA in the 70S ribosome, positioning it for translation. This Hamiltonella defensa subsp. Acyrthosiphon pisum (strain 5AT) protein is Small ribosomal subunit protein uS3.